We begin with the raw amino-acid sequence, 248 residues long: tRNA (guanine-N(1)-)-methyltransferase (248 aa).

S-adenosyl-L-methionine is bound by residues Gly-113 and 133–138 (VGDYVL).

It belongs to the RNA methyltransferase TrmD family. In terms of assembly, homodimer.

It is found in the cytoplasm. The enzyme catalyses guanosine(37) in tRNA + S-adenosyl-L-methionine = N(1)-methylguanosine(37) in tRNA + S-adenosyl-L-homocysteine + H(+). Its function is as follows. Specifically methylates guanosine-37 in various tRNAs. The chain is tRNA (guanine-N(1)-)-methyltransferase from Shewanella sp. (strain ANA-3).